The primary structure comprises 157 residues: Small ribosomal subunit protein uS7 (157 aa).

It belongs to the universal ribosomal protein uS7 family. In terms of assembly, part of the 30S ribosomal subunit. Contacts proteins S9 and S11.

Functionally, one of the primary rRNA binding proteins, it binds directly to 16S rRNA where it nucleates assembly of the head domain of the 30S subunit. Is located at the subunit interface close to the decoding center, probably blocks exit of the E-site tRNA. The polypeptide is Small ribosomal subunit protein uS7 (Koribacter versatilis (strain Ellin345)).